Consider the following 392-residue polypeptide: Alkaline phosphatase L (392 aa).

A signal peptide spans 1–23; it reads MYKRSLIAASLSVAALVSAQAMA.

This sequence belongs to the PstS family. Homodimer.

It is found in the secreted. The protein resides in the periplasm. It carries out the reaction a phosphate monoester + H2O = an alcohol + phosphate. In terms of biological role, has both a phosphomonoesterase and phosphodiesterase activity. The chain is Alkaline phosphatase L from Pseudomonas aeruginosa (strain UCBPP-PA14).